The sequence spans 166 residues: 2-amino-4-hydroxy-6-hydroxymethyldihydropteridine pyrophosphokinase (166 aa).

Belongs to the HPPK family.

The enzyme catalyses 6-hydroxymethyl-7,8-dihydropterin + ATP = (7,8-dihydropterin-6-yl)methyl diphosphate + AMP + H(+). The protein operates within cofactor biosynthesis; tetrahydrofolate biosynthesis; 2-amino-4-hydroxy-6-hydroxymethyl-7,8-dihydropteridine diphosphate from 7,8-dihydroneopterin triphosphate: step 4/4. Functionally, catalyzes the transfer of pyrophosphate from adenosine triphosphate (ATP) to 6-hydroxymethyl-7,8-dihydropterin, an enzymatic step in folate biosynthesis pathway. This is 2-amino-4-hydroxy-6-hydroxymethyldihydropteridine pyrophosphokinase (folK) from Streptococcus pyogenes serotype M1.